The following is a 614-amino-acid chain: Probable pectinesterase/pectinesterase inhibitor 13 (614 aa).

Residues isoleucine 25–alanine 45 traverse the membrane as a helical segment. A disordered region spans residues glutamine 55–proline 102. N-linked (GlcNAc...) asparagine glycans are attached at residues asparagine 66, asparagine 128, asparagine 197, asparagine 243, asparagine 301, asparagine 351, and asparagine 367. Residues glycine 103–leucine 255 are pectinesterase inhibitor 13. A pectinesterase 13 region spans residues asparagine 301 to aspartate 598. Positions 376 and 406 each coordinate substrate. Aspartate 429 acts as the Proton donor; for pectinesterase activity in catalysis. Cysteine 443 and cysteine 463 are oxidised to a cystine. The Nucleophile; for pectinesterase activity role is filled by aspartate 450. Residues arginine 518 and tryptophan 520 each contribute to the substrate site. Residues asparagine 522 and asparagine 588 are each glycosylated (N-linked (GlcNAc...) asparagine).

In the N-terminal section; belongs to the PMEI family. It in the C-terminal section; belongs to the pectinesterase family. Expressed in flower buds.

The protein localises to the membrane. It carries out the reaction [(1-&gt;4)-alpha-D-galacturonosyl methyl ester](n) + n H2O = [(1-&gt;4)-alpha-D-galacturonosyl](n) + n methanol + n H(+). It functions in the pathway glycan metabolism; pectin degradation; 2-dehydro-3-deoxy-D-gluconate from pectin: step 1/5. Acts in the modification of cell walls via demethylesterification of cell wall pectin. The polypeptide is Probable pectinesterase/pectinesterase inhibitor 13 (PME13) (Arabidopsis thaliana (Mouse-ear cress)).